Reading from the N-terminus, the 79-residue chain is UPF0154 protein SSP1415 (79 aa).

Residues 4–24 form a helical membrane-spanning segment; the sequence is WLAIVLIVLALILGLVGGFFL.

This sequence belongs to the UPF0154 family.

It localises to the membrane. In Staphylococcus saprophyticus subsp. saprophyticus (strain ATCC 15305 / DSM 20229 / NCIMB 8711 / NCTC 7292 / S-41), this protein is UPF0154 protein SSP1415.